A 445-amino-acid chain; its full sequence is UDP-N-acetylmuramate--L-alanine ligase (445 aa).

108-114 (GSDGKTT) lines the ATP pocket.

Belongs to the MurCDEF family.

Its subcellular location is the cytoplasm. The enzyme catalyses UDP-N-acetyl-alpha-D-muramate + L-alanine + ATP = UDP-N-acetyl-alpha-D-muramoyl-L-alanine + ADP + phosphate + H(+). The protein operates within cell wall biogenesis; peptidoglycan biosynthesis. Functionally, cell wall formation. This is UDP-N-acetylmuramate--L-alanine ligase from Pseudothermotoga lettingae (strain ATCC BAA-301 / DSM 14385 / NBRC 107922 / TMO) (Thermotoga lettingae).